A 366-amino-acid polypeptide reads, in one-letter code: Chorismate synthase (366 aa).

Arginine 48 and arginine 54 together coordinate NADP(+). Residues 125 to 127 (RSS), 241 to 242 (NA), glycine 285, 300 to 304 (KPTSS), and arginine 326 each bind FMN.

This sequence belongs to the chorismate synthase family. As to quaternary structure, homotetramer. The cofactor is FMNH2.

It carries out the reaction 5-O-(1-carboxyvinyl)-3-phosphoshikimate = chorismate + phosphate. It functions in the pathway metabolic intermediate biosynthesis; chorismate biosynthesis; chorismate from D-erythrose 4-phosphate and phosphoenolpyruvate: step 7/7. Catalyzes the anti-1,4-elimination of the C-3 phosphate and the C-6 proR hydrogen from 5-enolpyruvylshikimate-3-phosphate (EPSP) to yield chorismate, which is the branch point compound that serves as the starting substrate for the three terminal pathways of aromatic amino acid biosynthesis. This reaction introduces a second double bond into the aromatic ring system. The protein is Chorismate synthase of Cereibacter sphaeroides (strain ATCC 17029 / ATH 2.4.9) (Rhodobacter sphaeroides).